A 263-amino-acid polypeptide reads, in one-letter code: Phosphoinositide-3-kinase-interacting protein 1 (263 aa).

The N-terminal stretch at 1–18 is a signal peptide; that stretch reads MFGRLYFMLLLSVGLVDC. The Extracellular portion of the chain corresponds to 19 to 163; that stretch reads LSVVKDCITN…SGPKKKKDLG (145 aa). The region spanning 24 to 99 is the Kringle domain; that stretch reads DCITNNGEDY…KKEACDIRIC (76 aa). Disulfide bonds link Cys25–Cys99, Cys46–Cys80, and Cys69–Cys94. Residue Asn103 is glycosylated (N-linked (GlcNAc...) asparagine). Residues 164 to 184 traverse the membrane as a helical segment; it reads TLGYVLAVFMMAIIILLGGGI. Over 185 to 263 the chain is Cytoplasmic; that stretch reads TMGYFYKRGR…LMGSAGTPGA (79 aa). Residues 239-263 are disordered; it reads NNQTPTQEPVEGADPLMGSAGTPGA.

Its subcellular location is the cell membrane. In terms of biological role, negative regulator of hepatic phosphatidylinositol 3-kinase (PI3K) activity. This is Phosphoinositide-3-kinase-interacting protein 1 (pik3ip1) from Danio rerio (Zebrafish).